The primary structure comprises 312 residues: tRNA uridine(34) hydroxylase (312 aa).

Residues 130–225 enclose the Rhodanese domain; that stretch reads RGDEVVFFDG…YGEQFGNKGL (96 aa). Residue Cys-185 is the Cysteine persulfide intermediate of the active site.

Belongs to the TrhO family.

The enzyme catalyses uridine(34) in tRNA + AH2 + O2 = 5-hydroxyuridine(34) in tRNA + A + H2O. Functionally, catalyzes oxygen-dependent 5-hydroxyuridine (ho5U) modification at position 34 in tRNAs. The polypeptide is tRNA uridine(34) hydroxylase (Corynebacterium glutamicum (strain ATCC 13032 / DSM 20300 / JCM 1318 / BCRC 11384 / CCUG 27702 / LMG 3730 / NBRC 12168 / NCIMB 10025 / NRRL B-2784 / 534)).